The primary structure comprises 362 residues: Phosphoserine aminotransferase (362 aa).

L-glutamate is bound at residue Arg-42. Residues Trp-102, Thr-154, Asp-174, and Gln-197 each contribute to the pyridoxal 5'-phosphate site. The residue at position 198 (Lys-198) is an N6-(pyridoxal phosphate)lysine. 239–240 (NT) serves as a coordination point for pyridoxal 5'-phosphate.

Belongs to the class-V pyridoxal-phosphate-dependent aminotransferase family. SerC subfamily. Homodimer. Pyridoxal 5'-phosphate is required as a cofactor.

It localises to the cytoplasm. It catalyses the reaction O-phospho-L-serine + 2-oxoglutarate = 3-phosphooxypyruvate + L-glutamate. The catalysed reaction is 4-(phosphooxy)-L-threonine + 2-oxoglutarate = (R)-3-hydroxy-2-oxo-4-phosphooxybutanoate + L-glutamate. It participates in amino-acid biosynthesis; L-serine biosynthesis; L-serine from 3-phospho-D-glycerate: step 2/3. It functions in the pathway cofactor biosynthesis; pyridoxine 5'-phosphate biosynthesis; pyridoxine 5'-phosphate from D-erythrose 4-phosphate: step 3/5. In terms of biological role, catalyzes the reversible conversion of 3-phosphohydroxypyruvate to phosphoserine and of 3-hydroxy-2-oxo-4-phosphonooxybutanoate to phosphohydroxythreonine. The chain is Phosphoserine aminotransferase from Haemophilus ducreyi (strain 35000HP / ATCC 700724).